Reading from the N-terminus, the 377-residue chain is DNA-directed RNA polymerase subunit alpha (377 aa).

An alpha N-terminal domain (alpha-NTD) region spans residues 1–259 (MSDSSHNLLY…KHFSVFEKMD (259 aa)). The interval 279 to 377 (ILHKLVLGIN…KIRSSKNTKG (99 aa)) is alpha C-terminal domain (alpha-CTD).

The protein belongs to the RNA polymerase alpha chain family. Homodimer. The RNAP catalytic core consists of 2 alpha, 1 beta, 1 beta' and 1 omega subunit. When a sigma factor is associated with the core the holoenzyme is formed, which can initiate transcription.

The enzyme catalyses RNA(n) + a ribonucleoside 5'-triphosphate = RNA(n+1) + diphosphate. Its function is as follows. DNA-dependent RNA polymerase catalyzes the transcription of DNA into RNA using the four ribonucleoside triphosphates as substrates. The protein is DNA-directed RNA polymerase subunit alpha of Chlamydia trachomatis serovar L2 (strain ATCC VR-902B / DSM 19102 / 434/Bu).